A 341-amino-acid chain; its full sequence is Glycerol-3-phosphate dehydrogenase [NAD(P)+] (341 aa).

4 residues coordinate NADPH: Ser-15, Trp-16, Arg-36, and Lys-110. Sn-glycerol 3-phosphate contacts are provided by Lys-110, Gly-139, and Ser-141. Position 143 (Ala-143) interacts with NADPH. Sn-glycerol 3-phosphate is bound by residues Lys-194, Asp-247, Ser-257, Arg-258, and Asn-259. The active-site Proton acceptor is the Lys-194. Position 258 (Arg-258) interacts with NADPH. NADPH-binding residues include Val-282 and Glu-284.

This sequence belongs to the NAD-dependent glycerol-3-phosphate dehydrogenase family.

It localises to the cytoplasm. The catalysed reaction is sn-glycerol 3-phosphate + NAD(+) = dihydroxyacetone phosphate + NADH + H(+). It catalyses the reaction sn-glycerol 3-phosphate + NADP(+) = dihydroxyacetone phosphate + NADPH + H(+). It participates in membrane lipid metabolism; glycerophospholipid metabolism. Catalyzes the reduction of the glycolytic intermediate dihydroxyacetone phosphate (DHAP) to sn-glycerol 3-phosphate (G3P), the key precursor for phospholipid synthesis. In Stenotrophomonas maltophilia (strain K279a), this protein is Glycerol-3-phosphate dehydrogenase [NAD(P)+].